The sequence spans 227 residues: Mitochondrial inner membrane protease ATP23 (227 aa).

An a divalent metal cation-binding site is contributed by H129. E130 is a catalytic residue. An a divalent metal cation-binding site is contributed by H133.

The protein belongs to the peptidase M76 family.

The protein localises to the mitochondrion inner membrane. In terms of biological role, has a dual role in the assembly of mitochondrial ATPase. Acts as a protease that removes N-terminal residues of mitochondrial ATPase CF(0) subunit 6 at the intermembrane space side. Also involved in the correct assembly of the membrane-embedded ATPase CF(0) particle, probably mediating association of subunit 6 with the subunit 9 ring. This Cryptococcus neoformans var. neoformans serotype D (strain B-3501A) (Filobasidiella neoformans) protein is Mitochondrial inner membrane protease ATP23 (ATP23).